A 389-amino-acid chain; its full sequence is Homoserine O-acetyltransferase (389 aa).

An AB hydrolase-1 domain is found at 63–371 (NAVLVLHALT…SSDYGHDGFL (309 aa)). The active-site Nucleophile is the Ser-168. Arg-240 provides a ligand contact to substrate. Catalysis depends on residues Asp-334 and His-367. Residue Asp-368 coordinates substrate.

It belongs to the AB hydrolase superfamily. MetX family. As to quaternary structure, homodimer.

The protein localises to the cytoplasm. It catalyses the reaction L-homoserine + acetyl-CoA = O-acetyl-L-homoserine + CoA. The protein operates within amino-acid biosynthesis; L-methionine biosynthesis via de novo pathway; O-acetyl-L-homoserine from L-homoserine: step 1/1. Its function is as follows. Transfers an acetyl group from acetyl-CoA to L-homoserine, forming acetyl-L-homoserine. The polypeptide is Homoserine O-acetyltransferase (Clavibacter michiganensis subsp. michiganensis (strain NCPPB 382)).